A 60-amino-acid chain; its full sequence is Large ribosomal subunit protein uL30 (60 aa).

This sequence belongs to the universal ribosomal protein uL30 family. Part of the 50S ribosomal subunit.

This chain is Large ribosomal subunit protein uL30, found in Clavibacter michiganensis subsp. michiganensis (strain NCPPB 382).